Here is a 304-residue protein sequence, read N- to C-terminus: DCN1-like protein 3 (304 aa).

Disordered stretches follow at residues 1 to 87 (MGQC…EESS) and 285 to 304 (VEGRGALSSGPEGLCPEEQT). A lipid anchor (N-myristoyl glycine) is attached at glycine 2. A DCUN1 domain is found at 86 to 278 (SSLQRLEELF…LFDTFVEWEM (193 aa)).

In terms of assembly, part of a complex containing DCUN1D3, CUL3 and RBX1. Interacts (via the DCUN1 domain) with the unneddylated cullins: interacts with CUL1, CUL2, CUL3, CUL4A, CUL4B and CUL5; these interactions promote the cullin neddylation and the identity of the cullin dictates the affinity of the interaction. Interacts preferentially with CUL3; this interaction triggers the relocalization of CUL3 to the cell membrane where CUL3 is neddylated. Interacts (via DCUN1 domain) with RBX1. May also interact with regulators or subunits of cullin-RING ligases such as RNF7, ELOB and DDB1; these interactions are bridged by cullins. Interacts (via DCUN1 domain) with CAND1; this interaction is bridged by cullins and strongly inhibits cullin neddylation. These CAND-cullin-DCNL complexes can only be neddylated in the presence of a substrate adapter. Interacts (via DCUN1 domain) with the N-terminally acetylated form of UBE2M and UBE2F.

Its subcellular location is the cell membrane. It localises to the cytoplasm. The protein localises to the nucleus. The protein resides in the perinuclear region. Its function is as follows. Contributes to the neddylation of all cullins by transferring NEDD8 from N-terminally acetylated NEDD8-conjugating E2s enzyme to different cullin C-terminal domain-RBX complexes and may play a role in the cell cycle progression by regulating the SCF ubiquitin E3 ligase complex, after UV damage. At the cell membrane, can promote and as well inhibit cullins neddylation. The protein is DCN1-like protein 3 of Rattus norvegicus (Rat).